A 1014-amino-acid chain; its full sequence is Klotho (1014 aa).

The first 35 residues, 1–35, serve as a signal peptide directing secretion; the sequence is MPASAPPRRPRPPPPSLSLSLLLVLLGLAGRRLRA. Topologically, residues 36 to 983 are extracellular; it reads EPGDGAQTWA…ECSFFHTRKP (948 aa). Glycosyl hydrolase-1 regions lie at residues 59 to 508 and 517 to 955; these read FQGT…KNGF and LEGT…SNGF. Residues Asn161, Asn285, Asn346, Asn609, Asn614, and Asn696 are each glycosylated (N-linked (GlcNAc...) asparagine). Residues 984-1004 form a helical membrane-spanning segment; the sequence is LVAFIAFLFFAFIVSLSLIFY. Residues 1005–1014 lie on the Cytoplasmic side of the membrane; sequence YSKKGRRRYQ.

It belongs to the glycosyl hydrolase 1 family. Klotho subfamily. In terms of assembly, homodimer. Interacts with FGF23 and FGFR1.

Its subcellular location is the cell membrane. It localises to the apical cell membrane. The protein resides in the secreted. The enzyme catalyses a beta-D-glucuronoside + H2O = D-glucuronate + an alcohol. Functionally, may have weak glycosidase activity towards glucuronylated steroids. However, it lacks essential active site Glu residues at positions 241 and 874, suggesting it may be inactive as a glycosidase in vivo. May be involved in the regulation of calcium and phosphorus homeostasis by inhibiting the synthesis of active vitamin D. Essential factor for the specific interaction between FGF23 and FGFR1. The Klotho peptide generated by cleavage of the membrane-bound isoform may be an anti-aging circulating hormone which would extend life span by inhibiting insulin/IGF1 signaling. The sequence is that of Klotho (KL) from Macaca fascicularis (Crab-eating macaque).